A 396-amino-acid polypeptide reads, in one-letter code: 8-amino-7-oxononanoate synthase (396 aa).

Substrate is bound at residue R19. G106–Y107 lines the pyridoxal 5'-phosphate pocket. Residue H131 participates in substrate binding. Residues S176, H204, and T233 each contribute to the pyridoxal 5'-phosphate site. K236 carries the N6-(pyridoxal phosphate)lysine modification. T350 lines the substrate pocket.

This sequence belongs to the class-II pyridoxal-phosphate-dependent aminotransferase family. BioF subfamily. As to quaternary structure, homodimer. The cofactor is pyridoxal 5'-phosphate.

It catalyses the reaction 6-carboxyhexanoyl-[ACP] + L-alanine + H(+) = (8S)-8-amino-7-oxononanoate + holo-[ACP] + CO2. It participates in cofactor biosynthesis; biotin biosynthesis. Functionally, catalyzes the decarboxylative condensation of pimeloyl-[acyl-carrier protein] and L-alanine to produce 8-amino-7-oxononanoate (AON), [acyl-carrier protein], and carbon dioxide. In Pseudomonas syringae pv. tomato (strain ATCC BAA-871 / DC3000), this protein is 8-amino-7-oxononanoate synthase.